The primary structure comprises 256 residues: uncharacterized protein (256 aa).

A signal peptide spans 1–22 (MNNFRQCALCIGTSVLILLVSG). The N-palmitoyl cysteine moiety is linked to residue Cys-23. The S-diacylglycerol cysteine moiety is linked to residue Cys-23.

This sequence belongs to the staphylococcal tandem lipoprotein family.

The protein localises to the cell membrane. This is an uncharacterized protein from Staphylococcus aureus (strain bovine RF122 / ET3-1).